Reading from the N-terminus, the 216-residue chain is Elongation factor 1-beta (216 aa).

The disordered stretch occupies residues 71 to 131; the sequence is GQASGVSASS…AKKKESGKSS (61 aa). The span at 73-89 shows a compositional bias: low complexity; sequence ASGVSASSAPAAAAPAA. The span at 92 to 107 shows a compositional bias: acidic residues; that stretch reads DEDDDDDMDLFGDETE. A compositionally biased stretch (basic and acidic residues) spans 108–128; the sequence is EDKKAAAEREAAKPAKKKESG.

Belongs to the EF-1-beta/EF-1-delta family. In terms of assembly, EF-1 is composed of 4 subunits: alpha, beta (1B-alpha=beta'), delta (1B-beta), and gamma (1B-gamma).

In terms of biological role, EF-1-beta and EF-1-beta' stimulate the exchange of GDP bound to EF-1-alpha to GTP. The chain is Elongation factor 1-beta from Triticum aestivum (Wheat).